The chain runs to 654 residues: MRLYCLSGDLAKPCYIITFKGLRIMLDCGLTEQTVLNFLPLPFVQSLKWSNLPNFVPSRDHDPQMDGELKDCCGRVFVDSTPEFNLPMDKMLDFSEVDVILISNYLNMLALPYITENTGFKGKVYATEPTLQIGRFFLEELVDYIEVSPKACTARLWKEKLHLLPSPLSEAFRAKKWRTIFSLKDVQGSLSKVTIMGYDEKLDILGAFIATPVSSGYCLGSSNWVLSTAHEKICYVSGSSTLTTHPRPINQSALKHADVLIMTGLTQAPTVNPDTKLGELCMNVALTIRNNGSALIPCYPSGVVYDLFECLTQNLENAGLNNVPMFFISPVADSSLAYSNILAEWLSSAKQNKVYLPDDPFPHAFYLRNNKLKHYNHVFSEGFSKDFRQPCVVFCGHPSLRFGDAVHFIEMWGNNPNNSIIFTEPDFPYLQVLAPFQPLAMKAFYCPIDTSLNYQQANKLIKELKPNVLVIPEAYTKPHPSAPNLFIEQPDKKIITFKCGEIIRLPLKRKLDRIYITSELAQKISPKEVAAGVTFSTLTGVLQVKDKVHCIQPCADSVKDETISSNSAPTKEDVLKNVKYEYGSIDVDAVMKKLAQDGFSNIKLDRTGGALTLNLVNEDTVIKFEDNETHIICGGKPTTRLKLRDTIMKCLQSF.

7 residues coordinate 1D-myo-inositol hexakisphosphate: Met1, Arg2, Thr18, Phe19, Arg504, Lys508, and Arg509.

It belongs to the metallo-beta-lactamase superfamily. RNA-metabolizing metallo-beta-lactamase-like family. INTS9 subfamily. Belongs to the multiprotein complex Integrator, at least composed of IntS1, IntS2, IntS3, IntS4, omd/IntS5, IntS6, defl/IntS7, IntS8, IntS9, IntS10, IntS11, IntS12, asun/IntS13, IntS14 and IntS15. The core complex associates with protein phosphatase 2A subunits mts/PP2A and Pp2A-29B, to form the Integrator-PP2A (INTAC) complex. Within the complex, interacts with IntS1 and IntS12. IntS9 is part of the RNA endonuclease subcomplex, composed of IntS4, IntS9, IntS11 and inositol hexakisphosphate (InsP6).

The protein localises to the nucleus. Its subcellular location is the cytoplasm. It is found in the cytosol. Its function is as follows. Component of the integrator complex, a multiprotein complex that terminates RNA polymerase II (Pol II) transcription in the promoter-proximal region of genes. The integrator complex provides a quality checkpoint during transcription elongation by driving premature transcription termination of transcripts that are unfavorably configured for transcriptional elongation: the complex terminates transcription by (1) catalyzing dephosphorylation of the C-terminal domain (CTD) of Pol II subunit Polr2A/Rbp1 and Spt5, and (2) degrading the exiting nascent RNA transcript via endonuclease activity. The integrator complex is also involved in the 3'-end processing of the U7 snRNA, and also the spliceosomal snRNAs U1, U2, U4 and U5. This Drosophila melanogaster (Fruit fly) protein is Integrator complex subunit 9.